The primary structure comprises 365 residues: Putative agmatine deiminase (365 aa).

Catalysis depends on C357, which acts as the Amidino-cysteine intermediate.

Belongs to the agmatine deiminase family.

The catalysed reaction is agmatine + H2O = N-carbamoylputrescine + NH4(+). In Yersinia pseudotuberculosis serotype O:1b (strain IP 31758), this protein is Putative agmatine deiminase.